The following is a 116-amino-acid chain: RNA guanine-N7 methyltransferase activating subunit (116 aa).

The interval 1–55 (MAEALGAQELYEKMFEQRFTANDKEYQEYLKREQDQPPIVEDWKMGNQRNTDRYR) is interaction with RNMT. A disordered region spans residues 31-116 (KREQDQPPIV…SNQRFHSDRY (86 aa)). Positions 36–42 (QPPIVED) match the RNMT-activating domain motif. Residues 56–116 (DNRHHRGWDG…SNQRFHSDRY (61 aa)) form an RNA-binding region. Positions 67-78 (QNWSSNSYNQSY) are enriched in low complexity. Polar residues predominate over residues 97 to 110 (YQQGHYTHNPSNQR).

The protein belongs to the RAM family.

The protein localises to the nucleus. Its function is as follows. Regulatory subunit of the mRNA-capping methyltransferase RNMT:RAMAC complex that methylates the N7 position of the added guanosine to the 5'-cap structure of mRNAs. Promotes the recruitment of the methyl donor, S-adenosyl-L-methionine, to RNMT. Regulates RNMT expression by a post-transcriptional stabilizing mechanism. Binds RNA. This is RNA guanine-N7 methyltransferase activating subunit (ramac) from Xenopus tropicalis (Western clawed frog).